The chain runs to 227 residues: Inner membrane lipoprotein SadB (227 aa).

The N-terminal stretch at 1–21 is a signal peptide; that stretch reads MHKNGKFIPLLALGFTFFLSG. The N-palmitoyl cysteine moiety is linked to residue Cys-22. Residue Cys-22 is the site of S-diacylglycerol cysteine attachment. Positions 31 to 68 form a coiled coil; it reads VEEMKEQQKEQETKINLLEKQQKEQEAKINLLEKQQAT.

Homotrimer.

Its subcellular location is the cell inner membrane. In terms of biological role, required for proper surface expression of the autotransporter adhesin SadA. Could be directly involved in the biogenesis of functionally active SadA. In Salmonella typhimurium (strain LT2 / SGSC1412 / ATCC 700720), this protein is Inner membrane lipoprotein SadB.